The chain runs to 968 residues: Alanine--tRNA ligase, cytoplasmic (968 aa).

ATP-binding positions include Arg-77, His-95, Trp-176, and 214 to 216 (IWN). L-alanine is bound by residues Asn-216 and Asp-239. Gly-243 serves as a coordination point for ATP. 4 residues coordinate Zn(2+): His-606, His-610, Cys-724, and His-728.

This sequence belongs to the class-II aminoacyl-tRNA synthetase family. Monomer. The cofactor is Zn(2+).

The protein localises to the cytoplasm. The enzyme catalyses tRNA(Ala) + L-alanine + ATP = L-alanyl-tRNA(Ala) + AMP + diphosphate. Functionally, catalyzes the attachment of alanine to tRNA(Ala) in a two-step reaction: alanine is first activated by ATP to form Ala-AMP and then transferred to the acceptor end of tRNA(Ala). Also edits incorrectly charged tRNA(Ala) via its editing domain. The chain is Alanine--tRNA ligase, cytoplasmic from Caenorhabditis elegans.